The following is a 160-amino-acid chain: uncharacterized protein (160 aa).

3 C2H2-type zinc fingers span residues 10 to 32, 41 to 64, and 75 to 98; these read LSCL…LPTH, QTCD…KRYH, and FQCQ…KIEH. Tyrosine 115 carries the phosphotyrosine modification. Residue serine 116 is modified to Phosphoserine.

Its subcellular location is the nucleus. In terms of biological role, may be involved in transcriptional regulation. This is an uncharacterized protein from Drosophila melanogaster (Fruit fly).